The primary structure comprises 282 residues: Transcription factor BC1 (282 aa).

A disordered region spans residues 34–123 (TTAPAIPEDA…ATDSHSLAER (90 aa)). A compositionally biased stretch (polar residues) spans 45 to 55 (METSSVVLDTS). Over residues 75-84 (HSKEAKENGR) the composition is skewed to basic and acidic residues. The short motif at 109-116 (ARRGQATD) is the Nuclear localization signal element. The basic motif; degenerate stretch occupies residues 113 to 126 (QATDSHSLAERVRR). One can recognise a bHLH domain in the interval 113 to 163 (QATDSHSLAERVRRERISERMRMLQALVPGCDKVTGKALILDEIINYVQSL). Residues 127-163 (ERISERMRMLQALVPGCDKVTGKALILDEIINYVQSL) are helix-loop-helix motif. The disordered stretch occupies residues 219–251 (PAQSHAIMDTSNTSPTPYTLQVQGGSNNNSLSQ).

Belongs to the bHLH protein family. Homodimer. Component of a nuclear cell elongation controlling complex made of ILI5/BUL1, LO9-177 and BC1. Interacts with ILI5/BUL1 only in the presence of LO9-177. Interacts with IBH1. Binds to LO9-177 in the nucleus. Interacts with BCL1. As to expression, preferentially present in anthers and leaves lamina joints. Expressed in seedlings, leaves sheaths, collars and panicles.

The protein resides in the nucleus. Transcription activator that contributes, together with LO9-177 and ILI5/BUL1, to the promotion of leaf inclination and grain size by modulating cell elongation. Involved in the RLI1-dependent modulation of leaf inclination by promoting lamina joint cell elongation, especially in response to phosphate (Pi) availability. The polypeptide is Transcription factor BC1 (Oryza sativa subsp. japonica (Rice)).